The following is an 82-amino-acid chain: Small ribosomal subunit protein uS17 (82 aa).

This sequence belongs to the universal ribosomal protein uS17 family. As to quaternary structure, part of the 30S ribosomal subunit.

One of the primary rRNA binding proteins, it binds specifically to the 5'-end of 16S ribosomal RNA. This Paracoccus denitrificans (strain Pd 1222) protein is Small ribosomal subunit protein uS17.